Consider the following 343-residue polypeptide: Aspartate beta-hydroxylase domain-containing protein 2 (343 aa).

At 1 to 31 (MWLEWLVAWSWSLDGLRDCIATGIQSVRDCD) the chain is on the cytoplasmic side. A helical transmembrane segment spans residues 32-52 (GTAVITVACLLILFVWYCYHV). Over 53–343 (GREQPRPHVS…ALDFIFAPGR (291 aa)) the chain is Lumenal. N77 and N185 each carry an N-linked (GlcNAc...) asparagine glycan. Positions 202 and 246 each coordinate 2-oxoglutarate. H257 contacts Fe cation. 266–268 (RCH) is a 2-oxoglutarate binding site. Position 302 (H302) interacts with Fe cation. 2-oxoglutarate is bound at residue R315.

This sequence belongs to the aspartyl/asparaginyl beta-hydroxylase family. Fe cation is required as a cofactor.

The protein localises to the membrane. In terms of biological role, may function as 2-oxoglutarate-dependent dioxygenase. The chain is Aspartate beta-hydroxylase domain-containing protein 2 (Asphd2) from Mus musculus (Mouse).